Reading from the N-terminus, the 2121-residue chain is MEGSSLNVAAPVFKPSGAANSFTPAPSQPAPPTLLSSSGPDAAVHAPDHLSPSTMLSQIQNQMASGGGVPGGMIHMNASSRPFVPGTAVKPSIVEPPTPIPYHPPLSSFANASRSPVPQHRLGHALNPGSVQLTGLPTFLATPPVINHMPHMSRSPSYTGPPSPISPNFSGAASPFVMPPAQMSYGLPLPAGLMNGNMKPRRAKGLPPVTPLKTTGHNSTPSISMNPAAFAANLAALKARKKVVVCLPAEQLLPDDEALLAQPEDESLGEEVKSDVDGVETGARASEPGSAKSRHARASALTRSRWVQRQPLSSDKHDLVPFFEAPREEIVTCDIHPEPWPYSLGLPDTIEIYLPGMSAWDEYLELRYEEQQMEAATTDHEPRSPLAHQGIPLPPSTAGFTFDRRGRSLSISTPADPGMVTFKLNRFLESQQQQLSQYDSDQVCGLDSAQNFGDADKPFGRFQTDLPNRLREAFARRRGDSSDLNLRPSLKTTHNHTMSLGLPSSGGPFGPEVFSALDMIRANSDEGPSKPPSEAQDLPQKPLSDTEAFAGKSEIYLSNIAEEDGEQEPSAELAVEGHTRVGSWKDLGRGFGYEPQSPNAAPNGTTSKHVRQASRFSVNTSRHDGEENDELGFDGEEAEIRTNPSEDADASDFEEEPNEYGADHWRSRHNSVHLSAFGDGHDRYADDNQSHASNDDSLQDSLTPSDEQFSNPSDEEAAREERILRRQHRAAERAARRERKQRQRGRAYSDNTLPSSSIGEADIHHNGVYGQDEQQRNPRNGNTISNPSEQEHCDIDDDSQTFGHNDRSNMPDQGPQFSRDFRFPPLNPCTVDVDPQVQSSSVHSGNCPPMSGTLGRASGISLLNPDAKEFKFGGTSASTRSVSAPQPSMQTAPEAAGAHFRLPSIKTSSFGSSALGDAPTNAAHLNVGAAPFTPGLFTFKAIQRLQVPENSLSASPSIAVTSADGGADHRETENRDMQGREKRTRYGPIDYDSQDERSSVYSPSPPRPKASAATIEGPLRIFSSLARNSPQPFLPVGYSQQQRAVSHESRLTADAPSFVPTWAKSSQLLGGSTSFKRPSLPDWDQQGQQAVDKDLPSILDPTFFSRDVESKAIPVGRASKDDVRGAARPSLSSASTLASVDKQANKSAVEPSRAADVDSGQETSETHQAPFAWQPSASNRLAPRTQPMHIPSGPRSCHSPSISQTSDAGHVPSIRWGDRRTSSRMSMSSLDRRFRRSCRGKKGPDDVGGNDEDDYEDEEESVTDIIEEIVERMDKVLEGWAGKILDEVTIMGQVRPHPRNLASVSDFPLDQEKLVQDMFKRMEEALDSRLTPALFASHARRASDETQSTIRPLRQRNSSSDVKTANSSLADAPGEWDFDYVQDILDVKLGEFRNQIESTLAQVMAALDKNGHLGAAVKPNGNDKYTNDSGPLVDFAEVVTARLMTQLESTLQLHLHAAKEFQSASDVELQKAMQSKLDENLFLLSEKGATDRSSIQHMLESEMHGLERSFSKIVSSVEEHIRSALMLHLPPLLADKASSDGTLADRLTNQLGSALGPVLSEERRCMLEEHQRSRDLLLEALPSSTQIAQSTIKLVEPLVKSLKSEPIDSDALVKRLAEVIGKQSIEHLVDLNPVLALIEPLIVKHEEARAFSKKILQRQEDTERTLCELPGAINAKTEIFLSSANDTSERQGLILEKIAEIKAEIKDSSSTLSNAASLNTDALHRRLEDLAKDKILTRETAEKTLSELASVYQVLDSSYQALSRLEAQHTSSEESHRDATAWLEKQAQANADLAKELREAEARAARAEAGQAEAEAKLSSLGRESDSLRDQLAQLTAEFASFKAERTKEQEASEKAVADAMARVDRAEAASVETQDRMSRLLEQANVAEREAYDSAKSVLERASKAEGQVAALEKRIAEQDNKIGNLQQLSATQKQKAAQSHQKLAEGEKRVKELEGKAEELAEAAIRLRLLEEKANELEDVRRQLHDSVEREALMKKELTKYDDRFSEMETELVEIKDSFVERSVHEEVQRKYTESQKLVEQLEAKLQTLTASPLTFDGWEAVEKQKTGAWASMHAPRVHIEDVELVGRSSRSIRSVSFASTAGSQGKKEVEVDEGGWWS.

Residues 1 to 17 (MEGSSLNVAAPVFKPSG) carry the PAM2 1 motif. 6 disordered regions span residues 14–46 (KPSG…AVHA), 262–302 (QPED…SALT), 375–397 (AATT…PPST), 475–507 (ARRR…SSGG), 522–543 (ANSD…QKPL), and 586–819 (DLGR…QFSR). The effector domain stretch occupies residues 339–599 (PWPYSLGLPD…GFGYEPQSPN (261 aa)). Residues 596 to 607 (QSPNAAPNGTTS) show a composition bias toward polar residues. Composition is skewed to acidic residues over residues 626-637 (EENDELGFDGEE) and 646-658 (EDAD…EEPN). Basic and acidic residues predominate over residues 679–689 (DGHDRYADDNQ). The segment covering 690-712 (SHASNDDSLQDSLTPSDEQFSNP) has biased composition (polar residues). Residues 719-735 (REERILRRQHRAAERAA) are compositionally biased toward basic and acidic residues. Basic residues predominate over residues 736–745 (RRERKQRQRG). Composition is skewed to polar residues over residues 749–758 (SDNTLPSSSI) and 777–788 (NPRNGNTISNPS). Short sequence motifs (PAM2) lie at residues 858–874 (SGIS…KFGG) and 920–937 (TNAA…PGLF). A compositionally biased stretch (polar residues) spans 950–960 (NSLSASPSIAV). The segment at 950–1012 (NSLSASPSIA…PSPPRPKASA (63 aa)) is disordered. Basic and acidic residues predominate over residues 966–981 (GADHRETENRDMQGRE). A PAM2 4 motif is present at residues 1046-1063 (SHESRLTADAPSFVPTWA). 3 disordered regions span residues 1076 to 1096 (KRPS…KDLP), 1119 to 1261 (SKDD…EEES), and 1337 to 1369 (SHAR…NSSL). Polar residues predominate over residues 1198 to 1207 (HSPSISQTSD). Over residues 1248–1261 (GGNDEDDYEDEEES) the composition is skewed to acidic residues. Residues 1345-1369 (ETQSTIRPLRQRNSSSDVKTANSSL) show a composition bias toward polar residues. Residues 1783–2054 (LEKQAQANAD…EAKLQTLTAS (272 aa)) are a coiled coil. Positions 2099–2121 (SFASTAGSQGKKEVEVDEGGWWS) are disordered. Positions 2118-2120 (GWW) match the GWW motif.

Belongs to the UPA1 PAM2 domain-binding protein family. In terms of assembly, might form homodimers via its C-terminal coiled-coil domain. Part of large ribonucleoprotein complexes (mRNPs) containing RNA-binding proteins RRM4 and PAB1, endosome-binding protein UPA1, core scaffold protein UPA2 and associated factor GRP1. Interacts (via PAM2 motifs) with PAB1.

It is found in the cytoplasm. It localises to the cytoskeleton. The protein resides in the endosome. Functionally, core component of endosomal mRNA transport and appears to carry out crucial scaffolding functions. The endosomal mRNA transport regulates polarity of the infectious hyphae by transporting a broad spectrum of cargo mRNAs from the nucleus to cell poles. The sequence is that of PAM2 domain-containing protein UPA2 from Mycosarcoma maydis (Corn smut fungus).